Consider the following 269-residue polypeptide: Hydroxyethylthiazole kinase (269 aa).

Substrate is bound at residue methionine 41. ATP is bound by residues arginine 117 and serine 163. Glycine 190 provides a ligand contact to substrate.

The protein belongs to the Thz kinase family. The cofactor is Mg(2+).

The enzyme catalyses 5-(2-hydroxyethyl)-4-methylthiazole + ATP = 4-methyl-5-(2-phosphooxyethyl)-thiazole + ADP + H(+). It functions in the pathway cofactor biosynthesis; thiamine diphosphate biosynthesis; 4-methyl-5-(2-phosphoethyl)-thiazole from 5-(2-hydroxyethyl)-4-methylthiazole: step 1/1. Functionally, catalyzes the phosphorylation of the hydroxyl group of 4-methyl-5-beta-hydroxyethylthiazole (THZ). In Latilactobacillus sakei subsp. sakei (strain 23K) (Lactobacillus sakei subsp. sakei), this protein is Hydroxyethylthiazole kinase.